We begin with the raw amino-acid sequence, 260 residues long: Chlorocatechol 1,2-dioxygenase (260 aa).

The Fe cation site is built by Tyr-130, Tyr-164, His-188, and His-190.

Belongs to the intradiol ring-cleavage dioxygenase family. The cofactor is Fe(3+).

It carries out the reaction 3-chlorocatechol + O2 = (2E,4Z)-2-chloromuconate + 2 H(+). The catalysed reaction is 3,5-dichlorocatechol + O2 = (2E,4E)-2,4-dichloromuconate + 2 H(+). It participates in aromatic compound metabolism; 3-chlorocatechol degradation. In terms of biological role, preferentially converts 3-chlorocatechol and 3,5-dichlorocatechol as opposed to other chlorinated catechols. Retains diminished activity toward non-chlorinated substrates. This Pseudomonas putida (Arthrobacter siderocapsulatus) protein is Chlorocatechol 1,2-dioxygenase (clcA).